The sequence spans 132 residues: NAD(P) transhydrogenase subunit alpha part 2 (132 aa).

3 helical membrane-spanning segments follow: residues 43–63 (PLVF…YVVW), 72–92 (PLMS…MIAI), and 103–123 (LLGS…FIVT).

In terms of assembly, complex of an alpha and a beta chain; in Rickettsia, the alpha chain seems to be made of two subunits.

It localises to the cell inner membrane. The catalysed reaction is NAD(+) + NADPH + H(+)(in) = NADH + NADP(+) + H(+)(out). The transhydrogenation between NADH and NADP is coupled to respiration and ATP hydrolysis and functions as a proton pump across the membrane. The protein is NAD(P) transhydrogenase subunit alpha part 2 (pntAB) of Rickettsia prowazekii (strain Madrid E).